We begin with the raw amino-acid sequence, 223 residues long: Ribosomal RNA small subunit methyltransferase G (223 aa).

3 residues coordinate S-adenosyl-L-methionine: Gly85, Phe90, and Arg154.

It belongs to the methyltransferase superfamily. RNA methyltransferase RsmG family.

The protein localises to the cytoplasm. The enzyme catalyses guanosine(527) in 16S rRNA + S-adenosyl-L-methionine = N(7)-methylguanosine(527) in 16S rRNA + S-adenosyl-L-homocysteine. In terms of biological role, specifically methylates the N7 position of guanine in position 527 of 16S rRNA. This is Ribosomal RNA small subunit methyltransferase G from Rhodopseudomonas palustris (strain TIE-1).